The chain runs to 213 residues: Translation initiation factor IF-3 (213 aa).

The interval 178-213 (VKTLIKSEKPEKPEKPEKSEKTEKQGPSTPPAPSAS) is disordered. Residues 182 to 201 (IKSEKPEKPEKPEKSEKTEK) are compositionally biased toward basic and acidic residues.

The protein belongs to the IF-3 family. In terms of assembly, monomer.

Its subcellular location is the cytoplasm. Functionally, IF-3 binds to the 30S ribosomal subunit and shifts the equilibrium between 70S ribosomes and their 50S and 30S subunits in favor of the free subunits, thus enhancing the availability of 30S subunits on which protein synthesis initiation begins. The chain is Translation initiation factor IF-3 from Solibacter usitatus (strain Ellin6076).